We begin with the raw amino-acid sequence, 175 residues long: Translation initiation factor IF-3 (175 aa).

The protein belongs to the IF-3 family. As to quaternary structure, monomer.

The protein resides in the cytoplasm. In terms of biological role, IF-3 binds to the 30S ribosomal subunit and shifts the equilibrium between 70S ribosomes and their 50S and 30S subunits in favor of the free subunits, thus enhancing the availability of 30S subunits on which protein synthesis initiation begins. The protein is Translation initiation factor IF-3 of Staphylococcus aureus (strain USA300).